The following is a 412-amino-acid chain: Adenosine receptor A2a (412 aa).

Residues 1–7 (MPIMGSS) are Extracellular-facing. A helical membrane pass occupies residues 8–32 (VYITVELAIAVLAILGNVLVCWAVW). At 33 to 42 (LNSNLQNVTN) the chain is on the cytoplasmic side. The helical transmembrane segment at 43 to 66 (YFVVSLAAADIAVGVLAIPFAITI) threads the bilayer. Residues 67–77 (STGFCAACHGC) lie on the Extracellular side of the membrane. Disulfide bonds link Cys71/Cys159, Cys74/Cys146, and Cys77/Cys166. The chain crosses the membrane as a helical span at residues 78-100 (LFIACFVLVLTQSSIFSLLAIAI). At 101-120 (DRYIAIRIPLRYNGLVTGTR) the chain is on the cytoplasmic side. A helical membrane pass occupies residues 121–143 (AKGIIAICWVLSFAIGLTPMLGW). Residues 144 to 173 (NNCGQPKEGKNHSQGCGEGQVACLFEDVVP) lie on the Extracellular side of the membrane. The N-linked (GlcNAc...) asparagine glycan is linked to Asn154. Glu169 contributes to the adenosine binding site. A helical membrane pass occupies residues 174–198 (MNYMVYFNFFACVLVPLLLMLGVYL). At 199–234 (RIFLAARRQLKQMESQPLPGERARSTLQKEVHAAKS) the chain is on the cytoplasmic side. The chain crosses the membrane as a helical span at residues 235-258 (LAIIVGLFALCWLPLHIINCFTFF). Asn253 serves as a coordination point for adenosine. An intrachain disulfide couples Cys259 to Cys262. At 259 to 266 (CPDCSHAP) the chain is on the extracellular side. Residues 267-290 (LWLMYLAIVLSHTNSVVNPFIYAY) traverse the membrane as a helical segment. 2 residues coordinate adenosine: Ser277 and His278. Topologically, residues 291 to 412 (RIREFRQTFR…PLAQDGAGVS (122 aa)) are cytoplasmic. Positions 391–412 (KGVCPEPPGLDDPLAQDGAGVS) are disordered.

The protein belongs to the G-protein coupled receptor 1 family. Interacts (via cytoplasmic C-terminal domain) with USP4; the interaction is direct. May interact with DRD4. Interacts with NECAB2. Interacts (via cytoplasmic C-terminal domain) with GAS2L2; interaction enhances receptor-mediated adenylyl cyclase activity. Ubiquitinated. Deubiquitinated by USP4; leading to stabilization and expression at the cell surface.

Its subcellular location is the cell membrane. Receptor for adenosine. The activity of this receptor is mediated by G proteins which activate adenylyl cyclase. The chain is Adenosine receptor A2a (ADORA2A) from Homo sapiens (Human).